The primary structure comprises 141 residues: Ribonuclease VapC2 (141 aa).

The PINc domain occupies 7–129 (LIDKSALVRL…FDAIAALTGQ (123 aa)). Mg(2+) is bound by residues D99, D117, and D119.

The protein belongs to the PINc/VapC protein family. As to quaternary structure, probably active as a homodimer. Mg(2+) serves as cofactor.

Functionally, toxic component of a type II toxin-antitoxin (TA) system. Acts as an RNase. All its toxic effects are neutralized by coexpression with cognate antitoxin VapB2. In Mycobacterium tuberculosis (strain CDC 1551 / Oshkosh), this protein is Ribonuclease VapC2.